Reading from the N-terminus, the 120-residue chain is Adenosylhomocysteinase (120 aa).

Asn34 lines the NAD(+) pocket.

This sequence belongs to the adenosylhomocysteinase family. It depends on NAD(+) as a cofactor.

It localises to the cytoplasm. It carries out the reaction S-adenosyl-L-homocysteine + H2O = L-homocysteine + adenosine. The protein operates within amino-acid biosynthesis; L-homocysteine biosynthesis; L-homocysteine from S-adenosyl-L-homocysteine: step 1/1. Functionally, may play a key role in the regulation of the intracellular concentration of adenosylhomocysteine. This is Adenosylhomocysteinase (ahcY) from Streptomyces fradiae (Streptomyces roseoflavus).